The primary structure comprises 239 residues: Serine protease SplF (239 aa).

Positions 1–36 (MNKNIIIKSIAALTILTSVTGVGTTMVEGIQQTAKA) are cleaved as a signal peptide. Active-site charge relay system residues include H75, D114, and S192.

Belongs to the peptidase S1B family.

Its subcellular location is the secreted. The protein is Serine protease SplF (splF) of Staphylococcus aureus (strain Mu50 / ATCC 700699).